Consider the following 269-residue polypeptide: Shikimate dehydrogenase (NADP(+)) (269 aa).

Shikimate is bound by residues 17–19 and T64; that span reads SKS. K68 serves as the catalytic Proton acceptor. Residue D80 participates in NADP(+) binding. Shikimate contacts are provided by N89 and D105. NADP(+)-binding positions include 130-134, 154-159, and M213; these read GAGGA and NRTRAK. Y215 lines the shikimate pocket. G237 lines the NADP(+) pocket.

This sequence belongs to the shikimate dehydrogenase family. In terms of assembly, homodimer.

The catalysed reaction is shikimate + NADP(+) = 3-dehydroshikimate + NADPH + H(+). It functions in the pathway metabolic intermediate biosynthesis; chorismate biosynthesis; chorismate from D-erythrose 4-phosphate and phosphoenolpyruvate: step 4/7. Involved in the biosynthesis of the chorismate, which leads to the biosynthesis of aromatic amino acids. Catalyzes the reversible NADPH linked reduction of 3-dehydroshikimate (DHSA) to yield shikimate (SA). In Neisseria meningitidis serogroup C (strain 053442), this protein is Shikimate dehydrogenase (NADP(+)).